Here is a 674-residue protein sequence, read N- to C-terminus: uncharacterized protein (674 aa).

The signal sequence occupies residues 1–24 (MKTLKALKIFIIVYISSVSLESFA). Helical transmembrane passes span 226–246 (IIGA…ALNK) and 254–274 (ITLF…LEPL). Residues 363–384 (GNGPGGNNKPIPNFDPDSKKDR) form a disordered region. Helical transmembrane passes span 409–429 (IIIL…LLYF), 436–456 (CMIT…MVLF), 469–489 (VCIS…LLIT), and 562–582 (VVSI…FYYF). The interval 624–674 (SSVHAQGKSPVEDKPDIGSKRKDGVQQGEDSENSSGGELADLASGSGGGKL) is disordered. Over residues 633-647 (PVEDKPDIGSKRKDG) the composition is skewed to basic and acidic residues.

The protein belongs to the TrbL/VirB6 family.

The protein resides in the cell membrane. This is an uncharacterized protein from Rickettsia typhi (strain ATCC VR-144 / Wilmington).